The sequence spans 257 residues: Phosphatidylglycerol--prolipoprotein diacylglyceryl transferase (257 aa).

7 consecutive transmembrane segments (helical) span residues 13 to 33, 49 to 69, 88 to 108, 123 to 143, 152 to 172, 185 to 202, and 223 to 243; these read IGPI…AIGG, FLLN…RLMF, IYEG…AGLY, FAVL…IFNQ, FAFG…ILLI, GYQF…RGLI, and IGFF…AYWM. Arg136 lines the a 1,2-diacyl-sn-glycero-3-phospho-(1'-sn-glycerol) pocket.

This sequence belongs to the Lgt family.

It is found in the cell membrane. The enzyme catalyses L-cysteinyl-[prolipoprotein] + a 1,2-diacyl-sn-glycero-3-phospho-(1'-sn-glycerol) = an S-1,2-diacyl-sn-glyceryl-L-cysteinyl-[prolipoprotein] + sn-glycerol 1-phosphate + H(+). It participates in protein modification; lipoprotein biosynthesis (diacylglyceryl transfer). Functionally, catalyzes the transfer of the diacylglyceryl group from phosphatidylglycerol to the sulfhydryl group of the N-terminal cysteine of a prolipoprotein, the first step in the formation of mature lipoproteins. In Thermoanaerobacter pseudethanolicus (strain ATCC 33223 / 39E) (Clostridium thermohydrosulfuricum), this protein is Phosphatidylglycerol--prolipoprotein diacylglyceryl transferase.